A 184-amino-acid polypeptide reads, in one-letter code: Putative pre-16S rRNA nuclease (184 aa).

The disordered stretch occupies residues 1–23 (MFSSQHRLLYQPSGPDLSKNLDP).

Belongs to the YqgF nuclease family.

It is found in the cytoplasm. Its function is as follows. Could be a nuclease involved in processing of the 5'-end of pre-16S rRNA. The chain is Putative pre-16S rRNA nuclease from Mycobacterium leprae (strain Br4923).